The sequence spans 1370 residues: DNA-directed RNA polymerase subunit beta (1370 aa).

The protein belongs to the RNA polymerase beta chain family. As to quaternary structure, the RNAP catalytic core consists of 2 alpha, 1 beta, 1 beta' and 1 omega subunit. When a sigma factor is associated with the core the holoenzyme is formed, which can initiate transcription.

The enzyme catalyses RNA(n) + a ribonucleoside 5'-triphosphate = RNA(n+1) + diphosphate. DNA-dependent RNA polymerase catalyzes the transcription of DNA into RNA using the four ribonucleoside triphosphates as substrates. The chain is DNA-directed RNA polymerase subunit beta from Syntrophobacter fumaroxidans (strain DSM 10017 / MPOB).